Reading from the N-terminus, the 842-residue chain is Synaptonemal complex protein 2-like (842 aa).

4 disordered regions span residues 451–473, 505–560, 619–666, and 715–738; these read GSLEITNTEERSLENSKQDEPEQ, FARD…KQRV, STQK…SSLE, and EDAPGSPVVTDTSTPSQEDMPGSV. Basic and acidic residues-rich tracts occupy residues 458–470 and 505–525; these read TEERSLENSKQDE and FARDREQDRRMPFNDRNHDLL. Positions 543–559 are enriched in basic residues; sequence NHKRKSLRTYSQRKKQR. Composition is skewed to basic and acidic residues over residues 624–633 and 643–655; these read GLEKPERRGS and RVTDGLHWREPRS.

The protein belongs to the SYCP2 family. Specifically expressed in oocytes.

The protein resides in the nucleus. Its subcellular location is the chromosome. It is found in the centromere. Functionally, oocyte-specific protein that localizes to centromeres at the dictyate stage and regulates the survival of primordial oocytes. In Mus musculus (Mouse), this protein is Synaptonemal complex protein 2-like.